We begin with the raw amino-acid sequence, 161 residues long: Regulatory protein RecX (161 aa).

It belongs to the RecX family.

It is found in the cytoplasm. In terms of biological role, modulates RecA activity. The sequence is that of Regulatory protein RecX from Halorhodospira halophila (strain DSM 244 / SL1) (Ectothiorhodospira halophila (strain DSM 244 / SL1)).